The chain runs to 397 residues: NADH-quinone oxidoreductase subunit H 1 (397 aa).

Transmembrane regions (helical) follow at residues 7-27, 84-104, 120-140, 156-176, 198-218, 258-278, 279-299, 313-333, 337-357, and 376-396; these read FIFI…TTLA, PFLA…GPVI, IGVL…ALAG, SAQM…PLLI, LLSG…AAFA, MITV…APWP, AAYG…LVLL, TFPA…LPMV, LLPL…FMWI, and FLFP…AWTT.

Belongs to the complex I subunit 1 family. As to quaternary structure, NDH-1 is composed of 14 different subunits. Subunits NuoA, H, J, K, L, M, N constitute the membrane sector of the complex.

Its subcellular location is the cell inner membrane. It carries out the reaction a quinone + NADH + 5 H(+)(in) = a quinol + NAD(+) + 4 H(+)(out). In terms of biological role, NDH-1 shuttles electrons from NADH, via FMN and iron-sulfur (Fe-S) centers, to quinones in the respiratory chain. The immediate electron acceptor for the enzyme in this species is believed to be ubiquinone. Couples the redox reaction to proton translocation (for every two electrons transferred, four hydrogen ions are translocated across the cytoplasmic membrane), and thus conserves the redox energy in a proton gradient. This subunit may bind ubiquinone. This chain is NADH-quinone oxidoreductase subunit H 1, found in Solibacter usitatus (strain Ellin6076).